The sequence spans 26 residues: Stage V sporulation protein M (26 aa).

Residues 3–9 form an important for localization region; it reads FYTIKLP.

As to quaternary structure, interacts with SpoIVA. May interact with the ATP-dependent protease FtsH.

It localises to the forespore outer membrane. Its function is as follows. Coordinates cortex and coat assembly during sporulation. Associates with the spore coat protein SpoIVA and with the outer forespore membrane, thereby serving as a membrane anchor that tethers SpoIVA and the entire spore coat to the forespore surface. May also serve as a competitive inhibitor of FtsH activity during sporulation. The sequence is that of Stage V sporulation protein M from Bacillus subtilis (strain 168).